Here is a 254-residue protein sequence, read N- to C-terminus: Tumor necrosis factor ligand superfamily member 9 (254 aa).

Residues 1–28 (MEYASDASLDPEAPWPPAPRARACRVLP) are Cytoplasmic-facing. A helical; Signal-anchor for type II membrane protein membrane pass occupies residues 29-49 (WALVAGLLLLLLLAAACAVFL). Residues 50-254 (ACPWAVSGAR…PAGLPSPRSE (205 aa)) are Extracellular-facing. A THD domain is found at 91–240 (MFAQLVAQNV…GATVLGLFRV (150 aa)).

This sequence belongs to the tumor necrosis factor family. As to quaternary structure, homotrimer. In terms of tissue distribution, expressed in brain, placenta, lung, skeletal muscle and kidney.

Its subcellular location is the membrane. Its function is as follows. Cytokine that binds to TNFRSF9. Induces the proliferation of activated peripheral blood T-cells. May have a role in activation-induced cell death (AICD). May play a role in cognate interactions between T-cells and B-cells/macrophages. The sequence is that of Tumor necrosis factor ligand superfamily member 9 (TNFSF9) from Homo sapiens (Human).